The chain runs to 1140 residues: Chromosome partition protein Smc (1140 aa).

34–41 (PNGSGKSN) serves as a coordination point for ATP. Residues 160–484 (VDQFDSEIER…EKEASAKIAS (325 aa)) are a coiled coil. In terms of domain architecture, SMC hinge spans 502–619 (EGVIGLVRDL…VQDIDAGRRL (118 aa)). The stretch at 660–990 (LEGMKIQLSS…MLNEKKREVF (331 aa)) forms a coiled coil.

The protein belongs to the SMC family. Homodimer.

It localises to the cytoplasm. Functionally, required for chromosome condensation and partitioning. The polypeptide is Chromosome partition protein Smc (Thermoplasma acidophilum (strain ATCC 25905 / DSM 1728 / JCM 9062 / NBRC 15155 / AMRC-C165)).